A 205-amino-acid chain; its full sequence is CASP-like protein 0U1 (205 aa).

Over 1–38 (MDDAPGASDEAREPLLKRVGASVEGTSLMNHRLMKNPK) the chain is Cytoplasmic. A helical transmembrane segment spans residues 39-57 (FRALLVESLMALTTFSFMA). Residues 58–89 (KQTEGLAGPELSTLNDCGEAGCGFTKFYQFKG) are Extracellular-facing. A helical membrane pass occupies residues 90 to 110 (VVGVYAGFWAYTVILIAMYVI). Over 111–124 (RKAPPPGTEFASYA) the chain is Cytoplasmic. Residues 125-145 (LFTAAMATFVVMSITECASVV) form a helical membrane-spanning segment. The Extracellular segment spans residues 146–159 (LSSDYYVCKNADYS). A helical transmembrane segment spans residues 160 to 180 (LVSLIFAAATIVLNCLTCAFA). Residues 181–205 (WRQWGELKFVGLPKTLSALTETYPG) are Cytoplasmic-facing.

It belongs to the Casparian strip membrane proteins (CASP) family. Homodimer and heterodimers.

Its subcellular location is the cell membrane. The polypeptide is CASP-like protein 0U1 (Ostreococcus lucimarinus (strain CCE9901)).